A 103-amino-acid chain; its full sequence is Small ribosomal subunit protein uS10 (103 aa).

This sequence belongs to the universal ribosomal protein uS10 family. Part of the 30S ribosomal subunit.

Involved in the binding of tRNA to the ribosomes. This chain is Small ribosomal subunit protein uS10, found in Escherichia coli O127:H6 (strain E2348/69 / EPEC).